The primary structure comprises 224 residues: DNA repair and recombination protein RadB (224 aa).

Belongs to the eukaryotic RecA-like protein family. RadB subfamily.

Its function is as follows. Involved in DNA repair and in homologous recombination. May regulate the cleavage reactions of the branch-structured DNA. Has a very weak ATPase activity that is not stimulated by DNA. Binds DNA but does not promote DNA strands exchange. This is DNA repair and recombination protein RadB from Thermococcus onnurineus (strain NA1).